Here is a 211-residue protein sequence, read N- to C-terminus: Pyridoxine/pyridoxamine 5'-phosphate oxidase (211 aa).

Residues 7-10 (RREY) and Lys65 contribute to the substrate site. FMN contacts are provided by residues 60–65 (RIVLLK), 75–76 (YT), Arg81, Lys82, and Gln104. The substrate site is built by Tyr122, Arg126, and Ser130. Residues 139–140 (QS) and Trp184 contribute to the FMN site. 190–192 (RLH) is a binding site for substrate. Arg194 provides a ligand contact to FMN.

The protein belongs to the pyridoxamine 5'-phosphate oxidase family. In terms of assembly, homodimer. The cofactor is FMN.

The enzyme catalyses pyridoxamine 5'-phosphate + O2 + H2O = pyridoxal 5'-phosphate + H2O2 + NH4(+). It carries out the reaction pyridoxine 5'-phosphate + O2 = pyridoxal 5'-phosphate + H2O2. It functions in the pathway cofactor metabolism; pyridoxal 5'-phosphate salvage; pyridoxal 5'-phosphate from pyridoxamine 5'-phosphate: step 1/1. Its pathway is cofactor metabolism; pyridoxal 5'-phosphate salvage; pyridoxal 5'-phosphate from pyridoxine 5'-phosphate: step 1/1. Its function is as follows. Catalyzes the oxidation of either pyridoxine 5'-phosphate (PNP) or pyridoxamine 5'-phosphate (PMP) into pyridoxal 5'-phosphate (PLP). This is Pyridoxine/pyridoxamine 5'-phosphate oxidase from Vibrio campbellii (strain ATCC BAA-1116).